Consider the following 157-residue polypeptide: DNA gyrase inhibitor 2 (157 aa).

It belongs to the DNA gyrase inhibitor family. In terms of assembly, interacts with DNA gyrase.

The protein resides in the cytoplasm. Functionally, inhibits the supercoiling activity of DNA gyrase. Acts by inhibiting DNA gyrase at an early step, prior to (or at the step of) binding of DNA by the gyrase. It protects cells against toxins that target DNA gyrase, by inhibiting activity of these toxins and reducing the formation of lethal double-strand breaks in the cell. This Dickeya dadantii (strain 3937) (Erwinia chrysanthemi (strain 3937)) protein is DNA gyrase inhibitor 2.